A 736-amino-acid chain; its full sequence is DNA ligase (736 aa).

NAD(+)-binding positions include Asp41–Asp45, Ser91–Leu92, and Glu125. The active-site N6-AMP-lysine intermediate is Lys127. Residue Arg148 coordinates NAD(+). Residues Glu170 to Asn205 form a disordered region. Glu215, Lys347, and Lys371 together coordinate NAD(+). The Zn(2+) site is built by Cys463, Cys466, Cys481, and Cys487. The BRCT domain occupies Thr656–Gly736.

This sequence belongs to the NAD-dependent DNA ligase family. LigA subfamily. Mg(2+) is required as a cofactor. Requires Mn(2+) as cofactor.

It catalyses the reaction NAD(+) + (deoxyribonucleotide)n-3'-hydroxyl + 5'-phospho-(deoxyribonucleotide)m = (deoxyribonucleotide)n+m + AMP + beta-nicotinamide D-nucleotide.. Its function is as follows. DNA ligase that catalyzes the formation of phosphodiester linkages between 5'-phosphoryl and 3'-hydroxyl groups in double-stranded DNA using NAD as a coenzyme and as the energy source for the reaction. It is essential for DNA replication and repair of damaged DNA. The polypeptide is DNA ligase (Erythrobacter litoralis (strain HTCC2594)).